The sequence spans 379 residues: MARSGYTLPVFACAAAIAALQHLKNLQAELDPIEGPLHSVTLDLINPPQTVEIAIEQVAKLGPGTALAISRSDPGDNLDITRNTPIWAVVTWAEDQQLDSIVIEGGEGIGRLSSTNDRAAIYAYAQHLLQTNLQKLLNSTEKIRVTIILPEGRSLAQRTSNAAFGIVDGLSLLGTSGISQPLSAPEQLEQFQTQLQQKAEQRKHLVFCLGENGLDLAQKLGIDTACLIKTANWIGPMLVAASLEGVEGILLLGYHGKLIKLAGGIFHTHHYVADARQEILTAYAATLGLPQTDLNVVFNSPTTEAALQHLRHLDQTTGSQWVAQIYTELVRQIDQRSQTYIQSQTNHRVIIGSILFDQQRQIIVSSPGGTALREQVTMA.

Belongs to the CbiD family.

It carries out the reaction Co-precorrin-5B + S-adenosyl-L-methionine = Co-precorrin-6A + S-adenosyl-L-homocysteine. It functions in the pathway cofactor biosynthesis; adenosylcobalamin biosynthesis; cob(II)yrinate a,c-diamide from sirohydrochlorin (anaerobic route): step 6/10. Catalyzes the methylation of C-1 in cobalt-precorrin-5B to form cobalt-precorrin-6A. This chain is Cobalt-precorrin-5B C(1)-methyltransferase, found in Cyanothece sp. (strain PCC 7425 / ATCC 29141).